The primary structure comprises 137 residues: MTQRTLVLLKPDAVRRGLIGEIVGRIERKADWRITALELRTLDHGTLEQHYGEHKGRPFYEPLMEFMQSGPVVALVAEGERVIEGVRTLAGPTDPIAAAPGSIRGDFGTITRENLIHASDSEESAERELKLFFPGLS.

ATP-binding residues include K10, F59, R87, T93, R104, and N114. The active-site Pros-phosphohistidine intermediate is H117.

This sequence belongs to the NDK family. In terms of assembly, homotetramer. The cofactor is Mg(2+).

The protein resides in the cytoplasm. It carries out the reaction a 2'-deoxyribonucleoside 5'-diphosphate + ATP = a 2'-deoxyribonucleoside 5'-triphosphate + ADP. It catalyses the reaction a ribonucleoside 5'-diphosphate + ATP = a ribonucleoside 5'-triphosphate + ADP. In terms of biological role, major role in the synthesis of nucleoside triphosphates other than ATP. The ATP gamma phosphate is transferred to the NDP beta phosphate via a ping-pong mechanism, using a phosphorylated active-site intermediate. The chain is Nucleoside diphosphate kinase from Streptomyces griseus subsp. griseus (strain JCM 4626 / CBS 651.72 / NBRC 13350 / KCC S-0626 / ISP 5235).